We begin with the raw amino-acid sequence, 307 residues long: Ribonuclease Z (307 aa).

Residues His-63, His-65, Asp-67, His-68, His-143, Asp-213, and His-271 each coordinate Zn(2+). The Proton acceptor role is filled by Asp-67.

This sequence belongs to the RNase Z family. Homodimer. Zn(2+) is required as a cofactor.

The catalysed reaction is Endonucleolytic cleavage of RNA, removing extra 3' nucleotides from tRNA precursor, generating 3' termini of tRNAs. A 3'-hydroxy group is left at the tRNA terminus and a 5'-phosphoryl group is left at the trailer molecule.. Zinc phosphodiesterase, which displays some tRNA 3'-processing endonuclease activity. Probably involved in tRNA maturation, by removing a 3'-trailer from precursor tRNA. The chain is Ribonuclease Z from Lactococcus lactis subsp. cremoris (strain MG1363).